Consider the following 236-residue polypeptide: Alpha-acetolactate decarboxylase (236 aa).

The protein belongs to the alpha-acetolactate decarboxylase family.

It catalyses the reaction (2S)-2-acetolactate + H(+) = (R)-acetoin + CO2. The protein operates within polyol metabolism; (R,R)-butane-2,3-diol biosynthesis; (R,R)-butane-2,3-diol from pyruvate: step 2/3. In terms of biological role, converts acetolactate into acetoin. The protein is Alpha-acetolactate decarboxylase (aldB) of Lactococcus lactis subsp. cremoris (strain MG1363).